We begin with the raw amino-acid sequence, 545 residues long: Ubiquitin carboxyl-terminal hydrolase 17-like protein D (545 aa).

The 298-residue stretch at 51–348 folds into the USP domain; it reads CGLQNTGNSC…NAYVLFYVQQ (298 aa). The active-site Nucleophile is Cys-60. The active-site Proton acceptor is His-307. 2 disordered regions span residues 367 to 443 and 521 to 545; these read LDPE…KLGQ and RQEG…LLVR. Over residues 374-385 the composition is skewed to basic residues; that stretch reads KKSRRKKHKKKS. The span at 393–404 shows a compositional bias: basic and acidic residues; that stretch reads EPSKNREKKATK. Residues 524–537 show a composition bias toward basic residues; the sequence is GRRRSKKGKNKNKQ.

Belongs to the peptidase C19 family. USP17 subfamily. Detected in T-cell, myeloid, and embryonic stem cell lines.

The protein localises to the nucleus. It is found in the endoplasmic reticulum. It catalyses the reaction Thiol-dependent hydrolysis of ester, thioester, amide, peptide and isopeptide bonds formed by the C-terminal Gly of ubiquitin (a 76-residue protein attached to proteins as an intracellular targeting signal).. In terms of biological role, deubiquitinating enzyme that removes conjugated ubiquitin from specific proteins to regulate different cellular processes that may include cell proliferation, progression through the cell cycle, apoptosis, cell migration, and the cellular response to viral infection. The chain is Ubiquitin carboxyl-terminal hydrolase 17-like protein D from Mus musculus (Mouse).